The following is a 393-amino-acid chain: 1-deoxy-D-xylulose 5-phosphate reductoisomerase (393 aa).

Residues threonine 13, glycine 14, serine 15, isoleucine 16, and asparagine 128 each coordinate NADPH. Lysine 129 contributes to the 1-deoxy-D-xylulose 5-phosphate binding site. Residue glutamate 130 participates in NADPH binding. Aspartate 154 is a Mn(2+) binding site. Residues serine 155, glutamate 156, serine 178, and histidine 201 each contribute to the 1-deoxy-D-xylulose 5-phosphate site. Residue glutamate 156 participates in Mn(2+) binding. Glycine 207 contacts NADPH. 1-deoxy-D-xylulose 5-phosphate is bound by residues serine 214, asparagine 219, lysine 220, and glutamate 223. Glutamate 223 contributes to the Mn(2+) binding site.

It belongs to the DXR family. Requires Mg(2+) as cofactor. Mn(2+) serves as cofactor.

It catalyses the reaction 2-C-methyl-D-erythritol 4-phosphate + NADP(+) = 1-deoxy-D-xylulose 5-phosphate + NADPH + H(+). The protein operates within isoprenoid biosynthesis; isopentenyl diphosphate biosynthesis via DXP pathway; isopentenyl diphosphate from 1-deoxy-D-xylulose 5-phosphate: step 1/6. In terms of biological role, catalyzes the NADPH-dependent rearrangement and reduction of 1-deoxy-D-xylulose-5-phosphate (DXP) to 2-C-methyl-D-erythritol 4-phosphate (MEP). The sequence is that of 1-deoxy-D-xylulose 5-phosphate reductoisomerase from Acidithiobacillus ferrooxidans (strain ATCC 23270 / DSM 14882 / CIP 104768 / NCIMB 8455) (Ferrobacillus ferrooxidans (strain ATCC 23270)).